A 125-amino-acid polypeptide reads, in one-letter code: UPF0593 mitochondrial protein C806.05 (125 aa).

This sequence belongs to the UPF0593 family.

Its subcellular location is the mitochondrion. The protein is UPF0593 mitochondrial protein C806.05 of Schizosaccharomyces pombe (strain 972 / ATCC 24843) (Fission yeast).